Consider the following 154-residue polypeptide: PTTG1IP family member 2 (154 aa).

An N-terminal signal peptide occupies residues 1–26; sequence MCWLRAWGQILLPVFLSLFLIQLLIS. The Extracellular segment spans residues 27–97; that stretch reads FSENGFIHSP…SIYWLNCKVD (71 aa). A helical transmembrane segment spans residues 98 to 118; that stretch reads MFGIMMLLLIAVLITGFVWYC. Residues 119-154 lie on the Cytoplasmic side of the membrane; sequence CAYHFYLQDLNRNRVYFYGRRETVPIHDRSATVYDE.

Its subcellular location is the membrane. The chain is PTTG1IP family member 2 from Homo sapiens (Human).